Here is a 755-residue protein sequence, read N- to C-terminus: 1,4-alpha-glucan branching enzyme GlgB (755 aa).

The active-site Nucleophile is Asp-435. The active-site Proton donor is Glu-488.

Belongs to the glycosyl hydrolase 13 family. GlgB subfamily. Monomer.

It carries out the reaction Transfers a segment of a (1-&gt;4)-alpha-D-glucan chain to a primary hydroxy group in a similar glucan chain.. It functions in the pathway glycan biosynthesis; glycogen biosynthesis. Functionally, catalyzes the formation of the alpha-1,6-glucosidic linkages in glycogen by scission of a 1,4-alpha-linked oligosaccharide from growing alpha-1,4-glucan chains and the subsequent attachment of the oligosaccharide to the alpha-1,6 position. In Vibrio parahaemolyticus serotype O3:K6 (strain RIMD 2210633), this protein is 1,4-alpha-glucan branching enzyme GlgB.